Reading from the N-terminus, the 479-residue chain is Serine protease HTRA1A (479 aa).

The signal sequence occupies residues 1–18 (MILVTLFCICALVTSLQA). The IGFBP N-terminal domain occupies 27-111 (VIGGCPSHCD…RGKQGVCVCK (85 aa)). Disulfide bonds link Cys-31–Cys-56, Cys-35–Cys-58, Cys-40–Cys-59, Cys-47–Cys-62, Cys-70–Cys-87, and Cys-81–Cys-108. The 60-residue stretch at 96–155 (SATVRRRGKQGVCVCKSSDPVCGSDGVSYRDICELKRVSNRAQSLQQPPVLFIQRGACGT) folds into the Kazal-like domain. The tract at residues 203-363 (GSGFVVSDDG…IPSDKIRQFL (161 aa)) is serine protease. Active-site charge relay system residues include His-219, Asp-249, and Ser-327. In terms of domain architecture, PDZ spans 364 to 466 (AESYDRLARG…LRVVVRRGNE (103 aa)).

The protein belongs to the peptidase S1C family. As to quaternary structure, forms homotrimers. In the presence of substrate, may form higher-order multimers in a PDZ-independent manner.

It localises to the secreted. Its subcellular location is the cytoplasm. The protein resides in the cytosol. In terms of biological role, serine protease with a variety of targets, including extracellular matrix proteins and proteoglycans. Through cleavage of proteoglycans, may release soluble FGF-glycosaminoglycan complexes that promote the range and intensity of FGF signals in the extracellular space. Regulates the availability of insulin-like growth factors (IGFs) by cleaving IGF-binding proteins. Inhibits signaling mediated by TGF-beta family members. Consequently, may regulate many physiological processes. Intracellularly, degrades TSC2, leading to the activation of TSC2 downstream targets. The chain is Serine protease HTRA1A (htra1a) from Danio rerio (Zebrafish).